The following is a 363-amino-acid chain: Carbamoyl phosphate synthase small chain (363 aa).

The segment at 1 to 172 (MTKRILMLED…AFASPGDGKR (172 aa)) is CPSase. Residues S46, G220, and G222 each contribute to the L-glutamine site. The Glutamine amidotransferase type-1 domain maps to 172–359 (RVVLVDYGVK…MEMMNGKEEG (188 aa)). C247 acts as the Nucleophile in catalysis. L-glutamine is bound by residues L248, Q251, N289, G291, and Y292. Residues H332 and E334 contribute to the active site.

This sequence belongs to the CarA family. As to quaternary structure, composed of two chains; the small (or glutamine) chain promotes the hydrolysis of glutamine to ammonia, which is used by the large (or ammonia) chain to synthesize carbamoyl phosphate. Tetramer of heterodimers (alpha,beta)4.

It catalyses the reaction hydrogencarbonate + L-glutamine + 2 ATP + H2O = carbamoyl phosphate + L-glutamate + 2 ADP + phosphate + 2 H(+). It carries out the reaction L-glutamine + H2O = L-glutamate + NH4(+). It functions in the pathway amino-acid biosynthesis; L-arginine biosynthesis; carbamoyl phosphate from bicarbonate: step 1/1. The protein operates within pyrimidine metabolism; UMP biosynthesis via de novo pathway; (S)-dihydroorotate from bicarbonate: step 1/3. Small subunit of the glutamine-dependent carbamoyl phosphate synthetase (CPSase). CPSase catalyzes the formation of carbamoyl phosphate from the ammonia moiety of glutamine, carbonate, and phosphate donated by ATP, constituting the first step of 2 biosynthetic pathways, one leading to arginine and/or urea and the other to pyrimidine nucleotides. The small subunit (glutamine amidotransferase) binds and cleaves glutamine to supply the large subunit with the substrate ammonia. In Listeria monocytogenes serotype 4b (strain F2365), this protein is Carbamoyl phosphate synthase small chain.